Here is a 277-residue protein sequence, read N- to C-terminus: Pantothenate synthetase (277 aa).

ATP is bound at residue methionine 26–histidine 33. The active-site Proton donor is histidine 33. Glutamine 57 serves as a coordination point for (R)-pantoate. Glutamine 57 contacts beta-alanine. Glycine 144 to aspartate 147 contacts ATP. Position 150 (glutamine 150) interacts with (R)-pantoate. ATP contacts are provided by residues valine 173 and leucine 181–arginine 184.

It belongs to the pantothenate synthetase family. Homodimer.

It is found in the cytoplasm. The enzyme catalyses (R)-pantoate + beta-alanine + ATP = (R)-pantothenate + AMP + diphosphate + H(+). It participates in cofactor biosynthesis; (R)-pantothenate biosynthesis; (R)-pantothenate from (R)-pantoate and beta-alanine: step 1/1. Functionally, catalyzes the condensation of pantoate with beta-alanine in an ATP-dependent reaction via a pantoyl-adenylate intermediate. The protein is Pantothenate synthetase of Paraburkholderia phymatum (strain DSM 17167 / CIP 108236 / LMG 21445 / STM815) (Burkholderia phymatum).